A 455-amino-acid polypeptide reads, in one-letter code: Venom prothrombin activator hopsarin-D (455 aa).

The first 20 residues, M1–A20, serve as a signal peptide directing secretion. A propeptide spanning residues E21–R40 is cleaved from the precursor. The region spanning S41 to D86 is the Gla domain. Residues E46, E47, E54, E56, E59, E60, E65, E66, E69, E72, and E75 each carry the 4-carboxyglutamate modification. Residues C57 and C62 are joined by a disulfide bond. Residues D86 to C121 enclose the EGF-like 1; calcium-binding domain. Cystine bridges form between C90–C101, C95–C110, C112–C121, C129–C140, C136–C149, C151–C164, C172–C328, C236–C252, C376–C390, and C401–C429. Residue S92 is glycosylated (O-linked (Hex...) serine). An EGF-like 2 domain is found at C129–C164. Positions R182–R209 are cleaved as a propeptide — activation peptide. A Peptidase S1 domain is found at I210 to S453. The Charge relay system role is filled by H251. N254 carries N-linked (GlcNAc...) asparagine glycosylation. The active-site Charge relay system is the D308. The Charge relay system role is filled by S405.

Belongs to the peptidase S1 family. Snake venom subfamily. Heterodimer of a light chain and a heavy chain; disulfide-linked. Post-translationally, the vitamin K-dependent, enzymatic carboxylation of some glutamate residues allows the modified protein to bind calcium. Expressed by the venom gland.

Its subcellular location is the secreted. It carries out the reaction Selective cleavage of Arg-|-Thr and then Arg-|-Ile bonds in prothrombin to form thrombin.. Functionally, snake prothrombin activator that attacks the hemostatic system of prey. This protein is functionally similar to blood coagulation factor Xa. The procoagulant activity of hopsarin-D is approximately 10-fold lower than that of trocarin-D and FXa. The polypeptide is Venom prothrombin activator hopsarin-D (Hoplocephalus stephensii (Stephens's banded snake)).